The following is a 426-amino-acid chain: UDP-N-acetylglucosamine 1-carboxyvinyltransferase (426 aa).

Position 24–25 (24–25 (KN)) interacts with phosphoenolpyruvate. Arg-95 is a binding site for UDP-N-acetyl-alpha-D-glucosamine. Cys-119 functions as the Proton donor in the catalytic mechanism. A 2-(S-cysteinyl)pyruvic acid O-phosphothioketal modification is found at Cys-119. Residues 124–128 (RPVDQ), Asp-308, and Val-330 each bind UDP-N-acetyl-alpha-D-glucosamine.

This sequence belongs to the EPSP synthase family. MurA subfamily.

It is found in the cytoplasm. It catalyses the reaction phosphoenolpyruvate + UDP-N-acetyl-alpha-D-glucosamine = UDP-N-acetyl-3-O-(1-carboxyvinyl)-alpha-D-glucosamine + phosphate. It functions in the pathway cell wall biogenesis; peptidoglycan biosynthesis. Cell wall formation. Adds enolpyruvyl to UDP-N-acetylglucosamine. The chain is UDP-N-acetylglucosamine 1-carboxyvinyltransferase from Deinococcus radiodurans (strain ATCC 13939 / DSM 20539 / JCM 16871 / CCUG 27074 / LMG 4051 / NBRC 15346 / NCIMB 9279 / VKM B-1422 / R1).